The following is a 292-amino-acid chain: Elongation factor Ts (292 aa).

Residues 80–83 (TDSV) are involved in Mg(2+) ion dislocation from EF-Tu.

The protein belongs to the EF-Ts family.

Its subcellular location is the cytoplasm. In terms of biological role, associates with the EF-Tu.GDP complex and induces the exchange of GDP to GTP. It remains bound to the aminoacyl-tRNA.EF-Tu.GTP complex up to the GTP hydrolysis stage on the ribosome. The chain is Elongation factor Ts from Lactiplantibacillus plantarum (strain ATCC BAA-793 / NCIMB 8826 / WCFS1) (Lactobacillus plantarum).